Here is a 359-residue protein sequence, read N- to C-terminus: Alpha-2-HS-glycoprotein (359 aa).

Positions 1 to 18 (MKSFVLLFCLAQLWGCHS) are cleaved as a signal peptide. One can recognise a Cystatin fetuin-A-type 1 domain in the interval 27–133 (YKEPACDDPD…QFSVLFTKCD (107 aa)). 6 cysteine pairs are disulfide-bonded: Cys-32–Cys-350, Cys-89–Cys-100, Cys-114–Cys-132, Cys-146–Cys-149, Cys-208–Cys-219, and Cys-230–Cys-248. Asn-99 carries an N-linked (GlcNAc...) asparagine glycan. A phosphoserine mark is found at Ser-134, Ser-135, and Ser-138. The Cystatin fetuin-A-type 2 domain maps to 144–256 (KLCPDCPLLA…TCTLFQTQPV (113 aa)). Asn-156 and Asn-176 each carry an N-linked (GlcNAc...) asparagine glycan. Residues 257 to 285 (IPQPQPDGAEAEAPSAVPDAAGPTPSAAG) are disordered. Ser-271 carries O-linked (GalNAc...) serine glycosylation. Low complexity predominate over residues 276–285 (AAGPTPSAAG). Thr-280 carries an O-linked (GalNAc...) threonine glycan. O-linked (GalNAc...) serine glycosylation is found at Ser-282 and Ser-296. A Phosphothreonine modification is found at Thr-314. Ser-316, Ser-320, Ser-323, and Ser-325 each carry phosphoserine. O-linked (GalNAc...) threonine glycosylation occurs at Thr-334. Ser-341 carries an O-linked (GalNAc...) serine; partial glycan.

The protein belongs to the fetuin family. Phosphorylated by FAM20C in the extracellular medium. Liver and bone.

The protein resides in the secreted. Promotes endocytosis, possesses opsonic properties and influences the mineral phase of bone. Suggested to have lymphocyte stimulating properties, lipid binding capability and to bind thyroid hormone. This chain is Alpha-2-HS-glycoprotein (AHSG), found in Bos taurus (Bovine).